We begin with the raw amino-acid sequence, 440 residues long: Xaa-Pro dipeptidase (440 aa).

Residues Asp246, Asp257, His337, Glu382, and Glu421 each coordinate Mn(2+).

This sequence belongs to the peptidase M24B family. Bacterial-type prolidase subfamily. The cofactor is Mn(2+).

The enzyme catalyses Xaa-L-Pro dipeptide + H2O = an L-alpha-amino acid + L-proline. Splits dipeptides with a prolyl residue in the C-terminal position. The chain is Xaa-Pro dipeptidase from Aeromonas hydrophila subsp. hydrophila (strain ATCC 7966 / DSM 30187 / BCRC 13018 / CCUG 14551 / JCM 1027 / KCTC 2358 / NCIMB 9240 / NCTC 8049).